The following is a 262-amino-acid chain: Tetrahydromethanopterin S-methyltransferase subunit C (262 aa).

A run of 7 helical transmembrane segments spans residues 27–47 (LVGI…GGLL), 72–92 (PSIG…GVLI), 98–118 (LPVL…GFIV), 145–165 (ALAI…DIII), 173–193 (VIAL…NACI), 200–220 (KRTM…FAIA), and 222–242 (LDIV…GTFV).

It belongs to the MtrC family. As to quaternary structure, the complex is composed of 8 subunits; MtrA, MtrB, MtrC, MtrD, MtrE, MtrF, MtrG and MtrH.

The protein localises to the cell membrane. It carries out the reaction 5-methyl-5,6,7,8-tetrahydromethanopterin + coenzyme M + 2 Na(+)(in) = 5,6,7,8-tetrahydromethanopterin + methyl-coenzyme M + 2 Na(+)(out). The protein operates within one-carbon metabolism; methanogenesis from CO(2); methyl-coenzyme M from 5,10-methylene-5,6,7,8-tetrahydromethanopterin: step 2/2. Its function is as follows. Part of a complex that catalyzes the formation of methyl-coenzyme M and tetrahydromethanopterin from coenzyme M and methyl-tetrahydromethanopterin. This is an energy-conserving, sodium-ion translocating step. The sequence is that of Tetrahydromethanopterin S-methyltransferase subunit C from Methanococcus maripaludis (strain C5 / ATCC BAA-1333).